The sequence spans 362 residues: Protein RecA (362 aa).

77–84 (GPESSGKT) contributes to the ATP binding site.

It belongs to the RecA family.

It is found in the cytoplasm. In terms of biological role, can catalyze the hydrolysis of ATP in the presence of single-stranded DNA, the ATP-dependent uptake of single-stranded DNA by duplex DNA, and the ATP-dependent hybridization of homologous single-stranded DNAs. It interacts with LexA causing its activation and leading to its autocatalytic cleavage. In Rhizobium leguminosarum bv. trifolii (strain WSM2304), this protein is Protein RecA.